Here is a 316-residue protein sequence, read N- to C-terminus: MQILLANPRGFCAGVDRAISIVENALAIYGAPIYVRHEVVHNRYVVDSLRKRGAIFIEQISEVPDGAILIFSAHGVSQAVRNEAKSRDLTVFDATCPLVTKVHMEVARASRRGEESILIGHAGHPEVEGTMGQYSNPEGGMYLVESPEDVWTLNVKNEGKLSFMTQTTLSVDDTSDVIDALRKRFPKIVGPRKDDICYATTNRQEAVRALAEQADVVLVVGSKNSSNSNRLAELAQRMGRTAFLIDDATDIQEAWVKDAACVGVTAGASAPDILVQNVIARLREFGGGEAVTLEGREENIVFEVPKELRVDVREVE.

Position 12 (Cys-12) interacts with [4Fe-4S] cluster. The (2E)-4-hydroxy-3-methylbut-2-enyl diphosphate site is built by His-41 and His-74. 2 residues coordinate dimethylallyl diphosphate: His-41 and His-74. Isopentenyl diphosphate is bound by residues His-41 and His-74. [4Fe-4S] cluster is bound at residue Cys-96. Residue His-124 participates in (2E)-4-hydroxy-3-methylbut-2-enyl diphosphate binding. His-124 is a binding site for dimethylallyl diphosphate. His-124 is a binding site for isopentenyl diphosphate. The active-site Proton donor is the Glu-126. (2E)-4-hydroxy-3-methylbut-2-enyl diphosphate is bound at residue Thr-167. Cys-197 is a [4Fe-4S] cluster binding site. (2E)-4-hydroxy-3-methylbut-2-enyl diphosphate-binding residues include Ser-225, Ser-226, Asn-227, and Ser-269. Ser-225, Ser-226, Asn-227, and Ser-269 together coordinate dimethylallyl diphosphate. Isopentenyl diphosphate is bound by residues Ser-225, Ser-226, Asn-227, and Ser-269.

Belongs to the IspH family. As to quaternary structure, homodimer. The cofactor is [4Fe-4S] cluster.

It carries out the reaction isopentenyl diphosphate + 2 oxidized [2Fe-2S]-[ferredoxin] + H2O = (2E)-4-hydroxy-3-methylbut-2-enyl diphosphate + 2 reduced [2Fe-2S]-[ferredoxin] + 2 H(+). The enzyme catalyses dimethylallyl diphosphate + 2 oxidized [2Fe-2S]-[ferredoxin] + H2O = (2E)-4-hydroxy-3-methylbut-2-enyl diphosphate + 2 reduced [2Fe-2S]-[ferredoxin] + 2 H(+). It functions in the pathway isoprenoid biosynthesis; dimethylallyl diphosphate biosynthesis; dimethylallyl diphosphate from (2E)-4-hydroxy-3-methylbutenyl diphosphate: step 1/1. It participates in isoprenoid biosynthesis; isopentenyl diphosphate biosynthesis via DXP pathway; isopentenyl diphosphate from 1-deoxy-D-xylulose 5-phosphate: step 6/6. Its function is as follows. Catalyzes the conversion of 1-hydroxy-2-methyl-2-(E)-butenyl 4-diphosphate (HMBPP) into a mixture of isopentenyl diphosphate (IPP) and dimethylallyl diphosphate (DMAPP). Acts in the terminal step of the DOXP/MEP pathway for isoprenoid precursor biosynthesis. The sequence is that of 4-hydroxy-3-methylbut-2-enyl diphosphate reductase from Salmonella schwarzengrund (strain CVM19633).